The primary structure comprises 90 residues: DNA-binding protein HU (90 aa).

The segment at 57–90 (ARKGVNPQTRKPITIPERKVPKFKPGKALKEKVK) is disordered.

The protein belongs to the bacterial histone-like protein family.

Histone-like DNA-binding protein which is capable of wrapping DNA to stabilize it, and thus to prevent its denaturation under extreme environmental conditions. This Thermotoga maritima (strain ATCC 43589 / DSM 3109 / JCM 10099 / NBRC 100826 / MSB8) protein is DNA-binding protein HU (hup).